The sequence spans 743 residues: Serine/threonine-protein kinase GD17699 (743 aa).

Positions 54 to 78 are disordered; that stretch reads NVQEDNSYNRDCDSPVSSSSEPEKE. Doublecortin domains lie at 154 to 240 and 309 to 392; these read LRIK…VEYN and RIVT…AEDF. In terms of domain architecture, Protein kinase spans 473 to 731; sequence YTLGRIIGDG…SEDILDHPWT (259 aa). ATP-binding positions include 479–487 and Lys502; that span reads IGDGNFAIV. The active-site Proton acceptor is Asp594.

The protein belongs to the protein kinase superfamily. CAMK Ser/Thr protein kinase family. CaMK subfamily.

The enzyme catalyses L-seryl-[protein] + ATP = O-phospho-L-seryl-[protein] + ADP + H(+). It catalyses the reaction L-threonyl-[protein] + ATP = O-phospho-L-threonyl-[protein] + ADP + H(+). The chain is Serine/threonine-protein kinase GD17699 from Drosophila simulans (Fruit fly).